We begin with the raw amino-acid sequence, 74 residues long: uncharacterized protein (74 aa).

Residues 8–30 form a helical membrane-spanning segment; it reads LAAAVSSSAASAGVSRIAASAMA.

It is found in the mitochondrion outer membrane. This is an uncharacterized protein from Saccharomyces cerevisiae (strain ATCC 204508 / S288c) (Baker's yeast).